Reading from the N-terminus, the 428-residue chain is tRNA(Ile2) 2-agmatinylcytidine synthetase TiaS (428 aa).

The protein belongs to the TiaS family.

It is found in the cytoplasm. It catalyses the reaction cytidine(34) in tRNA(Ile2) + agmatine + ATP + H2O = 2-agmatinylcytidine(34) in tRNA(Ile2) + AMP + 2 phosphate + 2 H(+). In terms of biological role, ATP-dependent agmatine transferase that catalyzes the formation of 2-agmatinylcytidine (agm2C) at the wobble position (C34) of tRNA(Ile2), converting the codon specificity from AUG to AUA. The protein is tRNA(Ile2) 2-agmatinylcytidine synthetase TiaS of Methanosarcina mazei (strain ATCC BAA-159 / DSM 3647 / Goe1 / Go1 / JCM 11833 / OCM 88) (Methanosarcina frisia).